The following is a 464-amino-acid chain: Trigger factor (464 aa).

The 82-residue stretch at 162–243 (GDFISIDLSA…VGTVKERELP (82 aa)) folds into the PPIase FKBP-type domain. The interval 435–464 (ELFGNGEAETEEAASTDEAASDSTESEDQK) is disordered.

This sequence belongs to the FKBP-type PPIase family. Tig subfamily.

It is found in the cytoplasm. The catalysed reaction is [protein]-peptidylproline (omega=180) = [protein]-peptidylproline (omega=0). Involved in protein export. Acts as a chaperone by maintaining the newly synthesized protein in an open conformation. Functions as a peptidyl-prolyl cis-trans isomerase. The chain is Trigger factor from Rhodococcus jostii (strain RHA1).